The chain runs to 859 residues: Leucine--tRNA ligase (859 aa).

The 'HIGH' region signature appears at 42–52 (PYPSGRLHMGH). Positions 618–622 (KMSKS) match the 'KMSKS' region motif. Lys621 serves as a coordination point for ATP.

The protein belongs to the class-I aminoacyl-tRNA synthetase family.

The protein resides in the cytoplasm. The enzyme catalyses tRNA(Leu) + L-leucine + ATP = L-leucyl-tRNA(Leu) + AMP + diphosphate. The protein is Leucine--tRNA ligase of Shewanella amazonensis (strain ATCC BAA-1098 / SB2B).